The following is a 134-amino-acid chain: ATP synthase epsilon chain, chloroplastic (134 aa).

This sequence belongs to the ATPase epsilon chain family. As to quaternary structure, F-type ATPases have 2 components, CF(1) - the catalytic core - and CF(0) - the membrane proton channel. CF(1) has five subunits: alpha(3), beta(3), gamma(1), delta(1), epsilon(1). CF(0) has three main subunits: a, b and c.

Its subcellular location is the plastid. It is found in the chloroplast thylakoid membrane. Functionally, produces ATP from ADP in the presence of a proton gradient across the membrane. This Gracilaria tenuistipitata var. liui (Red alga) protein is ATP synthase epsilon chain, chloroplastic.